Consider the following 187-residue polypeptide: Threonylcarbamoyl-AMP synthase (187 aa).

The region spanning Thr-4–Leu-187 is the YrdC-like domain.

This sequence belongs to the SUA5 family. TsaC subfamily.

Its subcellular location is the cytoplasm. The enzyme catalyses L-threonine + hydrogencarbonate + ATP = L-threonylcarbamoyladenylate + diphosphate + H2O. Functionally, required for the formation of a threonylcarbamoyl group on adenosine at position 37 (t(6)A37) in tRNAs that read codons beginning with adenine. Catalyzes the conversion of L-threonine, HCO(3)(-)/CO(2) and ATP to give threonylcarbamoyl-AMP (TC-AMP) as the acyladenylate intermediate, with the release of diphosphate. The protein is Threonylcarbamoyl-AMP synthase of Xylella fastidiosa (strain M23).